The following is a 158-amino-acid chain: Glutathione peroxidase-like peroxiredoxin gpx1 (158 aa).

Cys-36 acts as the Cysteine sulfenic acid (-SOH) intermediate in catalysis. The cysteines at positions 36 and 82 are disulfide-linked.

Belongs to the glutathione peroxidase family. As to quaternary structure, monomer.

It localises to the cytoplasm. The protein resides in the mitochondrion. The enzyme catalyses a hydroperoxide + [thioredoxin]-dithiol = an alcohol + [thioredoxin]-disulfide + H2O. In terms of biological role, glutathione peroxidase-like protein that protects cells during oxidative stress. Has peroxidase activity reducing hydrogen peroxide, alkyl and phospholipid hydroperoxides using preferentially thioredoxin as a reducing power. May act as a scavenger of H(2)O(2). The chain is Glutathione peroxidase-like peroxiredoxin gpx1 from Schizosaccharomyces pombe (strain 972 / ATCC 24843) (Fission yeast).